The sequence spans 323 residues: tRNA U34 carboxymethyltransferase (323 aa).

Carboxy-S-adenosyl-L-methionine is bound by residues lysine 91, tryptophan 105, lysine 110, glycine 130, 152–154 (DPT), 181–182 (IE), methionine 196, tyrosine 200, and arginine 315.

The protein belongs to the class I-like SAM-binding methyltransferase superfamily. CmoB family. Homotetramer.

The catalysed reaction is carboxy-S-adenosyl-L-methionine + 5-hydroxyuridine(34) in tRNA = 5-carboxymethoxyuridine(34) in tRNA + S-adenosyl-L-homocysteine + H(+). In terms of biological role, catalyzes carboxymethyl transfer from carboxy-S-adenosyl-L-methionine (Cx-SAM) to 5-hydroxyuridine (ho5U) to form 5-carboxymethoxyuridine (cmo5U) at position 34 in tRNAs. This is tRNA U34 carboxymethyltransferase from Salmonella gallinarum (strain 287/91 / NCTC 13346).